The sequence spans 138 residues: Small ribosomal subunit protein uS11c (138 aa).

The interval 1–25 (MAKSIPRTGSRRNVRSGSRKSTRRI) is disordered. A compositionally biased stretch (basic residues) spans 9–25 (GSRRNVRSGSRKSTRRI).

The protein belongs to the universal ribosomal protein uS11 family. As to quaternary structure, part of the 30S ribosomal subunit.

The protein resides in the plastid. The protein localises to the chloroplast. The protein is Small ribosomal subunit protein uS11c of Eucalyptus globulus subsp. globulus (Tasmanian blue gum).